A 292-amino-acid polypeptide reads, in one-letter code: Protein/nucleic acid deglycase HchA (292 aa).

The span at 1-12 shows a compositional bias: polar residues; sequence MSQDVNELSKQP. The tract at residues 1-23 is disordered; sequence MSQDVNELSKQPTPDKAEDNAFF. The active-site Nucleophile is C190.

Belongs to the peptidase C56 family. HchA subfamily.

It is found in the cytoplasm. It carries out the reaction N(omega)-(1-hydroxy-2-oxopropyl)-L-arginyl-[protein] + H2O = lactate + L-arginyl-[protein] + H(+). The catalysed reaction is N(6)-(1-hydroxy-2-oxopropyl)-L-lysyl-[protein] + H2O = lactate + L-lysyl-[protein] + H(+). It catalyses the reaction S-(1-hydroxy-2-oxopropyl)-L-cysteinyl-[protein] + H2O = lactate + L-cysteinyl-[protein] + H(+). The enzyme catalyses N(omega)-(1-hydroxy-2-oxoethyl)-L-arginyl-[protein] + H2O = L-arginyl-[protein] + glycolate + H(+). It carries out the reaction N(6)-(1-hydroxy-2-oxoethyl)-L-lysyl-[protein] + H2O = glycolate + L-lysyl-[protein] + H(+). The catalysed reaction is S-(1-hydroxy-2-oxoethyl)-L-cysteinyl-[protein] + H2O = glycolate + L-cysteinyl-[protein] + H(+). It catalyses the reaction N(2)-(1-hydroxy-2-oxopropyl)-dGTP + H2O = lactate + dGTP + H(+). The enzyme catalyses N(2)-(1-hydroxy-2-oxopropyl)-GTP + H2O = lactate + GTP + H(+). It carries out the reaction N(2)-(1-hydroxy-2-oxopropyl)-GDP + H2O = lactate + GDP + H(+). The catalysed reaction is N(2)-(1-hydroxy-2-oxopropyl)-GMP + H2O = lactate + GMP + H(+). It catalyses the reaction N(2)-(1-hydroxy-2-oxoethyl)-dGTP + H2O = dGTP + glycolate + H(+). The enzyme catalyses N(2)-(1-hydroxy-2-oxoethyl)-GTP + H2O = glycolate + GTP + H(+). It carries out the reaction N(2)-(1-hydroxy-2-oxoethyl)-GDP + H2O = glycolate + GDP + H(+). The catalysed reaction is N(2)-(1-hydroxy-2-oxoethyl)-GMP + H2O = glycolate + GMP + H(+). It catalyses the reaction an N(2)-(1-hydroxy-2-oxopropyl)-guanosine in RNA + H2O = a guanosine in RNA + lactate + H(+). The enzyme catalyses an N(2)-(1-hydroxy-2-oxopropyl)-2'-deoxyguanosine in DNA + H2O = a 2'-deoxyguanosine in DNA + lactate + H(+). It carries out the reaction an N(2)-(1-hydroxy-2-oxoethyl)-guanosine in RNA + H2O = a guanosine in RNA + glycolate + H(+). The catalysed reaction is an N(2)-(1-hydroxy-2-oxoethyl)-2'-deoxyguanosine in DNA + H2O = a 2'-deoxyguanosine in DNA + glycolate + H(+). Functionally, protein and nucleotide deglycase that catalyzes the deglycation of the Maillard adducts formed between amino groups of proteins or nucleotides and reactive carbonyl groups of glyoxals. Thus, functions as a protein deglycase that repairs methylglyoxal- and glyoxal-glycated proteins, and releases repaired proteins and lactate or glycolate, respectively. Deglycates cysteine, arginine and lysine residues in proteins, and thus reactivates these proteins by reversing glycation by glyoxals. Acts on early glycation intermediates (hemithioacetals and aminocarbinols), preventing the formation of Schiff bases and advanced glycation endproducts (AGE). Also functions as a nucleotide deglycase able to repair glycated guanine in the free nucleotide pool (GTP, GDP, GMP, dGTP) and in DNA and RNA. Is thus involved in a major nucleotide repair system named guanine glycation repair (GG repair), dedicated to reversing methylglyoxal and glyoxal damage via nucleotide sanitization and direct nucleic acid repair. Plays an important role in protecting cells from carbonyl stress. This is Protein/nucleic acid deglycase HchA from Staphylococcus aureus (strain MSSA476).